The chain runs to 257 residues: MYNIQDHVVIITGSSSGIGLAASTLALASGAKVFGIDISNSPTSVTANPNYTFFAADLSHPESAKKAIAACIAAYGNRIDGLLNIAGVMDLNQSADTVTDDMWDRCIAINLTAPVKLMREVIPIMRLRGKGSIVNVGSKASMSGAVSGIAYTASKHGLVGATKNVAWRFKHEGIRCNIVCPGGVAATGIRDGVDSTQFDSEALEMMSVIHQAHASDHAKGLGLQPEDLAHSLLYFLSDLSKGISGAVIPVDNAWSTI.

A helical transmembrane segment spans residues 7–29 (HVVIITGSSSGIGLAASTLALAS). Ile-11 serves as a coordination point for NADP(+). N-linked (GlcNAc...) asparagine glycosylation occurs at Asn-50. Residue Asp-57 coordinates NADP(+). N-linked (GlcNAc...) asparagine glycosylation is found at Asn-92 and Asn-110. Residues Arg-119, Tyr-151, Lys-155, and Val-184 each coordinate NADP(+). The active-site Proton acceptor is the Tyr-151. The Lowers pKa of active site Tyr role is filled by Lys-155.

It belongs to the short-chain dehydrogenases/reductases (SDR) family.

It localises to the membrane. The enzyme catalyses protoaustinoid A + A = protoaustinoid B + AH2. The protein operates within secondary metabolite biosynthesis; terpenoid biosynthesis. In terms of biological role, short chain dehydrogenase; part of the gene cluster that mediates the biosynthesis of paraherquonin, a meroterpenoid with a unique, highly congested hexacyclic molecular architecture. The first step of the pathway is the synthesis of 3,5-dimethylorsellinic acid (DMOA) by the polyketide synthase prhL. Synthesis of DMOA is followed by farnesylation by the prenyltransferase prhE, methylesterification by the methyl-transferase prhM, epoxidation of the prenyl chain by the flavin-dependent monooxygenase prhF, and cyclization of the farnesyl moiety by the terpene cyclase prhH, to yield the tetracyclic intermediate, protoaustinoid A. The short chain dehydrogenase prhI then oxidizes the C-3 alcohol group of the terpene cyclase product to transform protoaustinoid A into protoaustinoid B. The FAD-binding monooxygenase prhJ catalyzes the oxidation of protoaustinoid B into preaustinoid A which is further oxidized into preaustinoid A1 by FAD-binding monooxygenase phrK. Finally, prhA leads to berkeleydione via the berkeleyone B intermediate. PrhA is a multifunctional dioxygenase that first desaturates at C5-C6 to form berkeleyone B, followed by rearrangement of the A/B-ring to form the cycloheptadiene moiety in berkeleydione. Berkeleydione serves as the key intermediate for the biosynthesis of paraherquonin as well as many other meroterpenoids. The cytochrome P450 monooxygenases prhB, prhD, and prhN, as well as the isomerase prhC, are probably involved in the late stage of paraherquonin biosynthesis, after the production of berkeleydione. Especially prhC might be a multifunctional enzyme that catalyzes the D-ring expansion via intramolecular methoxy rearrangement, as well as the hydrolysis of the expanded D-ring. The protein is Short chain dehydrogenase prhI of Penicillium brasilianum.